Consider the following 286-residue polypeptide: Glycine--tRNA ligase alpha subunit (286 aa).

The protein belongs to the class-II aminoacyl-tRNA synthetase family. In terms of assembly, tetramer of two alpha and two beta subunits.

It localises to the cytoplasm. The enzyme catalyses tRNA(Gly) + glycine + ATP = glycyl-tRNA(Gly) + AMP + diphosphate. In Campylobacter concisus (strain 13826), this protein is Glycine--tRNA ligase alpha subunit.